A 72-amino-acid polypeptide reads, in one-letter code: Neuropeptide IMFamide (72 aa).

The signal sequence occupies residues 1 to 24 (MMRFTIGVVCLVAVLLSLAEVSEA). A Phenylalanine amide modification is found at F36. A propeptide spanning residues 40 to 72 (GPTEYDQRGKTFTALCEIATEACQAWFPSTENK) is cleaved from the precursor.

In terms of tissue distribution, expressed in corpora cardiaca (CC), corpora allata (CA), antennal lobe (AL) and gnathal ganglion (GNG) (at protein level). Expression detected in only a few animals (at protein level).

The protein resides in the secreted. The chain is Neuropeptide IMFamide from Agrotis ipsilon (Black cutworm moth).